The sequence spans 195 residues: Putative L(+)-tartrate dehydratase subunit beta (195 aa).

His36 is a catalytic residue. Lys104 is a substrate binding site.

Belongs to the class-I fumarase family. As to quaternary structure, heterotetramer of two alpha and two beta subunits.

It catalyses the reaction (2R,3R)-tartrate = oxaloacetate + H2O. This is Putative L(+)-tartrate dehydratase subunit beta from Methanocaldococcus jannaschii (strain ATCC 43067 / DSM 2661 / JAL-1 / JCM 10045 / NBRC 100440) (Methanococcus jannaschii).